The primary structure comprises 578 residues: Sulfite reductase [NADPH] hemoprotein beta-component (578 aa).

The disordered stretch occupies residues 1 to 21; sequence MTNTLAGPDRSRDISQPLEKL. Residues Cys443, Cys449, Cys488, and Cys492 each contribute to the [4Fe-4S] cluster site. Cys492 lines the siroheme pocket.

It belongs to the nitrite and sulfite reductase 4Fe-4S domain family. Alpha(8)-beta(8). The alpha component is a flavoprotein, the beta component is a hemoprotein. The cofactor is siroheme. Requires [4Fe-4S] cluster as cofactor.

The enzyme catalyses hydrogen sulfide + 3 NADP(+) + 3 H2O = sulfite + 3 NADPH + 4 H(+). It participates in sulfur metabolism; hydrogen sulfide biosynthesis; hydrogen sulfide from sulfite (NADPH route): step 1/1. Functionally, component of the sulfite reductase complex that catalyzes the 6-electron reduction of sulfite to sulfide. This is one of several activities required for the biosynthesis of L-cysteine from sulfate. The polypeptide is Sulfite reductase [NADPH] hemoprotein beta-component (Methylocella silvestris (strain DSM 15510 / CIP 108128 / LMG 27833 / NCIMB 13906 / BL2)).